Consider the following 423-residue polypeptide: Deoxyguanosinetriphosphate triphosphohydrolase-like protein (423 aa).

Residues 66–216 (RLTHSLEVAQ…MDFSDDIAYS (151 aa)) form the HD domain.

Belongs to the dGTPase family. Type 2 subfamily.

In Corynebacterium diphtheriae (strain ATCC 700971 / NCTC 13129 / Biotype gravis), this protein is Deoxyguanosinetriphosphate triphosphohydrolase-like protein.